We begin with the raw amino-acid sequence, 526 residues long: MSTTVRPDEVSSILRKQLAGFESEAEVYDVGTVLQVGDGIARVYGLLKAAAGELLEFPHNIMGMVLNLEEDNVGAVMFGASNAVKEGDTVRRTGILASIPVGEAMLGRVINPLGEPIDGKGAIETSIRLPLERRAPGVIYRKSVHEPLQTGLKAIDAMIPIGRGQRELIIGDRQTGKTAVALDTIINQKGKGVYCIYVAIGLKGSTVAQVVNTLEKHGAMEYTTVISATASDPAPLQFIAPFAGAALGEYFRDTGRHALVIYDDLSKQAVAYRQLSLLLRRPPGREAYPGDVFFLHSRLLERAAKITDDIEVAKKMNDLPEALKPMVKGGGSLTALPVIETQAGDVSAYIPTNVISITDGQIFLESNLFNSGQRPAINVGISVSRVGGAAQIKAMKKVAGTLRLDLAQFRELEAFSKFGSDLDKTTKAQLDRGARLVEILKQGQYIPMPVEKQVAIIFLGTQGLLDAVAVDHIRKFEEDFLAMLELKHPEILKSIEEKGSLEPDTANGLKEAAAKFIITFNEKAKA.

Glycine 171–threonine 178 contacts ATP.

The protein belongs to the ATPase alpha/beta chains family. In terms of assembly, F-type ATPases have 2 components, CF(1) - the catalytic core - and CF(0) - the membrane proton channel. CF(1) has five subunits: alpha(3), beta(3), gamma(1), delta(1), epsilon(1). CF(0) has four main subunits: a(1), b(1), b'(1) and c(9-12).

Its subcellular location is the cell inner membrane. It catalyses the reaction ATP + H2O + 4 H(+)(in) = ADP + phosphate + 5 H(+)(out). Functionally, produces ATP from ADP in the presence of a proton gradient across the membrane. The alpha chain is a regulatory subunit. This chain is ATP synthase subunit alpha, found in Chlorobium phaeovibrioides (strain DSM 265 / 1930) (Prosthecochloris vibrioformis (strain DSM 265)).